The sequence spans 386 residues: GTPase Obg (386 aa).

The 159-residue stretch at 1–159 folds into the Obg domain; the sequence is MKFVDEASIL…RELLLELMLL (159 aa). Positions 127-147 are disordered; it reads NTRFKSSVNRTPRQKTNGTPG. Over residues 129–145 the composition is skewed to polar residues; it reads RFKSSVNRTPRQKTNGT. In terms of domain architecture, OBG-type G spans 160–333; sequence ADVGMLGMPN…LCWDVMTFII (174 aa). GTP contacts are provided by residues 166-173, 191-195, 213-216, 283-286, and 314-316; these read GMPNAGKS, FTTLV, DIPG, NKID, and SAA. The Mg(2+) site is built by serine 173 and threonine 193.

Belongs to the TRAFAC class OBG-HflX-like GTPase superfamily. OBG GTPase family. In terms of assembly, monomer. It depends on Mg(2+) as a cofactor.

It is found in the cytoplasm. Its function is as follows. An essential GTPase which binds GTP, GDP and possibly (p)ppGpp with moderate affinity, with high nucleotide exchange rates and a fairly low GTP hydrolysis rate. Plays a role in control of the cell cycle, stress response, ribosome biogenesis and in those bacteria that undergo differentiation, in morphogenesis control. This is GTPase Obg from Escherichia coli (strain UTI89 / UPEC).